The following is a 206-amino-acid chain: Urease accessory protein UreG (206 aa).

Residue 11-18 participates in GTP binding; sequence GPVGAGKT.

The protein belongs to the SIMIBI class G3E GTPase family. UreG subfamily. In terms of assembly, homodimer. UreD, UreF and UreG form a complex that acts as a GTP-hydrolysis-dependent molecular chaperone, activating the urease apoprotein by helping to assemble the nickel containing metallocenter of UreC. The UreE protein probably delivers the nickel.

Its subcellular location is the cytoplasm. Its function is as follows. Facilitates the functional incorporation of the urease nickel metallocenter. This process requires GTP hydrolysis, probably effectuated by UreG. This is Urease accessory protein UreG from Ureaplasma parvum serovar 3 (strain ATCC 700970).